The primary structure comprises 638 residues: ATP-dependent zinc metalloprotease FtsH (638 aa).

The Cytoplasmic segment spans residues 1–4; it reads MNNQ. The helical transmembrane segment at 5–25 threads the bilayer; sequence GKNIIVWAVIFVFVILLFNVF. The Periplasmic portion of the chain corresponds to 26–103; it reads QSDGLLSSKN…VVPPETRMNT (78 aa). Residues 104–124 traverse the membrane as a helical segment; that stretch reads FLSFLISWFPMLLLIGVWVFF. Residues 125–638 lie on the Cytoplasmic side of the membrane; it reads MRQMHGGGKA…PIKAKKEDKS (514 aa). Residue 195 to 202 coordinates ATP; sequence GPPGTGKT. A Zn(2+)-binding site is contributed by histidine 417. Glutamate 418 is an active-site residue. Zn(2+)-binding residues include histidine 421 and aspartate 495. The disordered stretch occupies residues 523–544; that stretch reads SASEDMYTNRNSSSDRSESTSE.

The protein in the central section; belongs to the AAA ATPase family. It in the C-terminal section; belongs to the peptidase M41 family. As to quaternary structure, homohexamer. The cofactor is Zn(2+).

It localises to the cell inner membrane. Its function is as follows. Acts as a processive, ATP-dependent zinc metallopeptidase for both cytoplasmic and membrane proteins. Plays a role in the quality control of integral membrane proteins. The sequence is that of ATP-dependent zinc metalloprotease FtsH from Rickettsia bellii (strain RML369-C).